The following is a 425-amino-acid chain: GTPase Obg (425 aa).

In terms of domain architecture, Obg spans 1–158 (MFVDVARIYV…RWLLLELKVV (158 aa)). The region spanning 159 to 330 (ADVGLVGFPN…LLEAAYDLIR (172 aa)) is the OBG-type G domain. Residues 165 to 172 (GFPNAGKS), 190 to 194 (FTTLT), 212 to 215 (DIPG), 282 to 285 (NKMD), and 311 to 313 (SGA) each bind GTP. 2 residues coordinate Mg(2+): Ser172 and Thr192. The 78-residue stretch at 345–422 (VYRPKEEGWR…VCDIEFELMA (78 aa)) folds into the OCT domain.

Belongs to the TRAFAC class OBG-HflX-like GTPase superfamily. OBG GTPase family. Monomer. The cofactor is Mg(2+).

It localises to the cytoplasm. Functionally, an essential GTPase which binds GTP, GDP and possibly (p)ppGpp with moderate affinity, with high nucleotide exchange rates and a fairly low GTP hydrolysis rate. Plays a role in control of the cell cycle, stress response, ribosome biogenesis and in those bacteria that undergo differentiation, in morphogenesis control. This is GTPase Obg from Symbiobacterium thermophilum (strain DSM 24528 / JCM 14929 / IAM 14863 / T).